Consider the following 1759-residue polypeptide: Zinc finger protein castor homolog 1 (1759 aa).

Disordered stretches follow at residues 1-26 (MDLG…PKRK) and 46-175 (KRAD…SSLR). 2 stretches are compositionally biased toward basic and acidic residues: residues 77–88 (PRSEEDKRRAVI) and 137–160 (EEPS…KEDS). The segment covering 161–171 (GPSTRQASGEA) has biased composition (polar residues). Lys-288 is covalently cross-linked (Glycyl lysine isopeptide (Lys-Gly) (interchain with G-Cter in SUMO2)). Positions 374–420 (SKYDVRGIQKPGPAKVPPTPSLAPAPLASVPSAPSAPGPGPEPPASL) are disordered. Over residues 387–396 (AKVPPTPSLA) the composition is skewed to pro residues. The segment covering 397–406 (PAPLASVPSA) has biased composition (low complexity). Residues 407-417 (PSAPGPGPEPP) are compositionally biased toward pro residues. 3 C2H2-type zinc fingers span residues 551–575 (YHCM…ENFH), 610–634 (FHCR…KSYH), and 668–692 (FHCI…KRKH). 4 disordered regions span residues 686–723 (TSHK…SSND), 736–776 (SSLS…SGLL), 824–843 (VSSG…VASG), and 889–949 (ATFD…AVPA). A compositionally biased stretch (basic residues) spans 687 to 698 (SHKRKHERRHIR). A compositionally biased stretch (low complexity) spans 699 to 712 (SSGALGLPPSLLGA). Ser-720 and Ser-721 each carry phosphoserine. Residues 736 to 764 (SSLSASPTSQQSSASLAAATAATEAGPSA) show a composition bias toward low complexity. Over residues 925-939 (ASQDRSLDLTVKEPS) the composition is skewed to basic and acidic residues. A Glycyl lysine isopeptide (Lys-Gly) (interchain with G-Cter in SUMO2) cross-link involves residue Lys-975. At Ser-981 the chain carries Phosphoserine. The C2H2-type 4 zinc-finger motif lies at 1031–1055 (FHCVVEECGALFSTLDGAIKHANFH). Residues 1067 to 1111 (TEAAFPASAAETKPPMAPSSPPVPPVTTATVSSLEGPAPSPASVP) form a disordered region. Residues 1081-1091 (PMAPSSPPVPP) are compositionally biased toward pro residues. The C2H2-type 5 zinc finger occupies 1300-1324 (FHCIREGCQFSFLLKHQMTSHARKH). The tract at residues 1367–1392 (ESSTMDRSCSSTPVGNESTAAGNTIS) is disordered. C2H2-type zinc fingers lie at residues 1457–1481 (YHCT…AQHH), 1515–1537 (FHCL…RKHH), and 1571–1595 (FHCT…KRKH). Disordered regions lie at residues 1589–1620 (DSHK…DGSL) and 1643–1736 (LGDA…AGAR). The span at 1655 to 1673 (AAPGPREGAAAAAAAAGES) shows a compositional bias: low complexity. The span at 1674–1723 (SQEDEEEELELPEEEAEDDEDEDDDEDDDDEDDDEDDDDEDLRTDSEESL) shows a compositional bias: acidic residues. Over residues 1724–1736 (PEAAAEAAGAGAR) the composition is skewed to low complexity.

In terms of tissue distribution, expressed in heart, lung, skeletal muscle, pancreas, testis, small intestine, and stomach, but it is not detectable in the adult brain.

Its subcellular location is the nucleus. Functionally, transcriptional activator. Involved in vascular assembly and morphogenesis through direct transcriptional regulation of EGFL7. The chain is Zinc finger protein castor homolog 1 (CASZ1) from Homo sapiens (Human).